The chain runs to 446 residues: Glutamate-1-semialdehyde 2,1-aminomutase (446 aa).

N6-(pyridoxal phosphate)lysine is present on Lys-264.

Belongs to the class-III pyridoxal-phosphate-dependent aminotransferase family. HemL subfamily. Pyridoxal 5'-phosphate serves as cofactor.

The protein resides in the cytoplasm. The enzyme catalyses (S)-4-amino-5-oxopentanoate = 5-aminolevulinate. It functions in the pathway porphyrin-containing compound metabolism; protoporphyrin-IX biosynthesis; 5-aminolevulinate from L-glutamyl-tRNA(Glu): step 2/2. This is Glutamate-1-semialdehyde 2,1-aminomutase from Natronomonas pharaonis (strain ATCC 35678 / DSM 2160 / CIP 103997 / JCM 8858 / NBRC 14720 / NCIMB 2260 / Gabara) (Halobacterium pharaonis).